A 430-amino-acid polypeptide reads, in one-letter code: Small ribosomal subunit protein uS3m (430 aa).

This sequence belongs to the universal ribosomal protein uS3 family.

Its subcellular location is the mitochondrion. The polypeptide is Small ribosomal subunit protein uS3m (RPS3) (Marchantia polymorpha (Common liverwort)).